The chain runs to 514 residues: Cytochrome P450 monooxygenase nodJ (514 aa).

A helical membrane pass occupies residues 2–24 (ELIVIIITLAFCILLYGTRWRAA). Asparagine 144, asparagine 245, and asparagine 416 each carry an N-linked (GlcNAc...) asparagine glycan. Cysteine 432 is a binding site for heme.

Belongs to the cytochrome P450 family. It depends on heme as a cofactor.

Its subcellular location is the membrane. Its pathway is secondary metabolite biosynthesis. Functionally, cytochrome P450 monooxygenase; part of the gene cluster that mediates the biosynthesis of the indole diterpenes nodulisporic acids (NA). Nodulisporic acid A (NAA) and its chemically modified derivatives are of particular significance because of their highly potent insecticidal activity against blood-feeding arthropods and lack of observable adverse effects on mammals, in particular the tremogenicity associated with the paspaline-derived IDTs is not observed. The geranylgeranyl diphosphate (GGPP) synthase ggs1, localized outside of the cluster, is proposed to catalyze the first step in nodulisporic acid biosynthesis via conversion of farnesyl pyrophosphate and isopentyl pyrophosphate into geranylgeranyl pyrophosphate (GGPP). Condensation of indole-3-glycerol phosphate with GGPP by the prenyl transferase nodC then forms 3-geranylgeranylindole (3-GGI). Epoxidation by the FAD-dependent monooxygenase nodM leads to a single-epoxidized-GGI that is substrate of the terpene cyclase nodB for cyclization to yield emindole SB. The terminal methyl carbon, C28, of emindole SB is then oxidized by the cytochrome P450 monooxygenase nodW to produce nodulisporic acid F (NAF), the pentacyclic core of NAA. NAF is converted to nodulisporic acid E (NAE) via prenylation. This step is probably performed by one of the indole diterpene prenyltransferases nodD1 or nodD2. Several oxidation steps performed by the FAD-linked oxidoreductase nodO and one of the cytochrome P450 monooxygenase nodR, nodX or nodZ further convert NAE to nodulisporic acid D (NAD). NAD is substrate of cytochrome P450 monooxygenase nodJ to produce the precursor of nodulisporic acid C (NAC), converted to NAC by one of the indole diterpene prenyltransferases nodD1 or nodD2. The FAD-dependent monooxygenase nodY2 then oxidizes NAC to nodulisporic acid B (NAB). Finally NAB is converted to NAA by one of the cytochrome P450 monooxygenases nodR, nodX or nodZ. This Hypoxylon pulicicidum protein is Cytochrome P450 monooxygenase nodJ.